Consider the following 305-residue polypeptide: Homoserine O-acetyltransferase (305 aa).

The active-site Acyl-thioester intermediate is the C142. Residues K163 and S192 each contribute to the substrate site. Catalysis depends on H235, which acts as the Proton acceptor. E237 is a catalytic residue. Substrate is bound at residue R249.

It belongs to the MetA family.

The protein localises to the cytoplasm. The catalysed reaction is L-homoserine + acetyl-CoA = O-acetyl-L-homoserine + CoA. The protein operates within amino-acid biosynthesis; L-methionine biosynthesis via de novo pathway; O-acetyl-L-homoserine from L-homoserine: step 1/1. Its function is as follows. Transfers an acetyl group from acetyl-CoA to L-homoserine, forming acetyl-L-homoserine. This chain is Homoserine O-acetyltransferase, found in Bacteroides fragilis (strain ATCC 25285 / DSM 2151 / CCUG 4856 / JCM 11019 / LMG 10263 / NCTC 9343 / Onslow / VPI 2553 / EN-2).